A 120-amino-acid chain; its full sequence is Glycine cleavage system H protein (120 aa).

Positions 17–99 constitute a Lipoyl-binding domain; sequence VATVGITAHA…QGAGWLYRLK (83 aa). Position 58 is an N6-lipoyllysine (Lys58).

It belongs to the GcvH family. In terms of assembly, the glycine cleavage system is composed of four proteins: P, T, L and H. It depends on (R)-lipoate as a cofactor.

In terms of biological role, the glycine cleavage system catalyzes the degradation of glycine. The H protein shuttles the methylamine group of glycine from the P protein to the T protein. In Methylorubrum populi (strain ATCC BAA-705 / NCIMB 13946 / BJ001) (Methylobacterium populi), this protein is Glycine cleavage system H protein.